A 658-amino-acid polypeptide reads, in one-letter code: Carnitine O-palmitoyltransferase 2, mitochondrial (658 aa).

A mitochondrion-targeting transit peptide spans 1 to 26 (MARLLTSSSALRWGAVSSSQSVGRAY). Over 27–179 (SSGSPDTEYV…GYLEPEIFHL (153 aa)) the chain is Mitochondrial matrix. Positions 180–209 (NPAKSDTLTFRKLIRFVPSSLSWYGAYMVN) form an intramembrane region, note=Mitochondrial inner membrane. The Mitochondrial matrix segment spans residues 210-658 (AYPLDMSQYF…FTVLQDKPIK (449 aa)). H373 functions as the Proton acceptor in the catalytic mechanism. Residue 453–465 (GKELLKTQKLSPD) participates in CoA binding. Residues Y487, S489, and T500 each contribute to the (R)-carnitine site.

This sequence belongs to the carnitine/choline acetyltransferase family.

It localises to the mitochondrion inner membrane. It catalyses the reaction (R)-carnitine + hexadecanoyl-CoA = O-hexadecanoyl-(R)-carnitine + CoA. The enzyme catalyses octanoyl-CoA + (R)-carnitine = O-octanoyl-(R)-carnitine + CoA. The catalysed reaction is decanoyl-CoA + (R)-carnitine = O-decanoyl-(R)-carnitine + CoA. It carries out the reaction dodecanoyl-CoA + (R)-carnitine = O-dodecanoyl-R-carnitine + CoA. It catalyses the reaction tetradecanoyl-CoA + (R)-carnitine = O-tetradecanoyl-(R)-carnitine + CoA. The enzyme catalyses (R)-carnitine + octadecanoyl-CoA = O-octadecanoyl-(R)-carnitine + CoA. The catalysed reaction is eicosanoyl-CoA + (R)-carnitine = O-eicosanoyl-(R)-carnitine + CoA. It carries out the reaction (9Z)-tetradecenoyl-CoA + (R)-carnitine = O-(9Z)-tetradecenoyl-(R)-carnitine + CoA. It catalyses the reaction (5Z)-tetradecenoyl-CoA + (R)-carnitine = O-(5Z)-tetradecenoyl-(R)-carnitine + CoA. The enzyme catalyses (R)-carnitine + (9Z)-octadecenoyl-CoA = O-(9Z)-octadecenoyl-(R)-carnitine + CoA. The catalysed reaction is 4,8-dimethylnonanoyl-CoA + (R)-carnitine = O-4,8-dimethylnonanoyl-(R)-carnitine + CoA. It functions in the pathway lipid metabolism; fatty acid beta-oxidation. In terms of biological role, involved in the intramitochondrial synthesis of acylcarnitines from accumulated acyl-CoA metabolites. Reconverts acylcarnitines back into the respective acyl-CoA esters that can then undergo beta-oxidation, an essential step for the mitochondrial uptake of long-chain fatty acids and their subsequent beta-oxidation in the mitochondrion. Active with medium (C8-C12) and long-chain (C14-C18) acyl-CoA esters. This chain is Carnitine O-palmitoyltransferase 2, mitochondrial (cpt2), found in Xenopus tropicalis (Western clawed frog).